Here is a 260-residue protein sequence, read N- to C-terminus: Snake venom serine protease homolog 1 (260 aa).

The N-terminal stretch at M1 to A18 is a signal peptide. Positions Q19–L24 are excised as a propeptide. Residues V25–A251 form the Peptidase S1 domain. Disulfide bonds link C31-C165, C52-C68, C100-C258, C144-C212, C176-C191, and C202-C227. N-linked (GlcNAc...) asparagine glycosylation occurs at N253.

It belongs to the peptidase S1 family. Snake venom subfamily. As to expression, expressed by the venom gland.

Its subcellular location is the secreted. Snake venom serine protease homolog that may act in the hemostasis system of the prey. The chain is Snake venom serine protease homolog 1 from Bitis gabonica (Gaboon adder).